An 87-amino-acid polypeptide reads, in one-letter code: Virulence protein PagD (87 aa).

An N-terminal signal peptide occupies residues 1 to 20; the sequence is MKHHAFMLWSLLIFSFHVLA. Positions 46 to 87 are disordered; that stretch reads QPPTNTDKKQARQISSPSCPTTKPMMSAPVNDARKGNTFSRT. Over residues 57-66 the composition is skewed to polar residues; it reads RQISSPSCPT.

In terms of biological role, putative function in virulence. Could be involved in promoting S.typhimurium survival within macrophages. In Salmonella typhimurium (strain LT2 / SGSC1412 / ATCC 700720), this protein is Virulence protein PagD (pagD).